A 287-amino-acid polypeptide reads, in one-letter code: Transcription cofactor vestigial-like protein 4 (287 aa).

Disordered regions lie at residues 44-68 (ASAL…SMEP) and 251-287 (AAKD…SVVS). 2 positions are modified to phosphoserine: serine 58 and serine 271. Over residues 275 to 287 (HMVSHSHSPSVVS) the composition is skewed to low complexity.

The protein belongs to the vestigial family. Interacts with TEFs. Interacts with IRF2BP2.

It localises to the nucleus. In terms of biological role, may act as a specific coactivator for the mammalian TEFs. The polypeptide is Transcription cofactor vestigial-like protein 4 (Vgll4) (Mus musculus (Mouse)).